The following is a 99-amino-acid chain: Putative type 4B encapsulin shell protein PF1875 (99 aa).

The protein belongs to the encapsulin family. Family 4B subfamily. May self-assemble into facets and potentially into larger complexes.

The protein localises to the encapsulin nanocompartment. May be the encapsulin shell protein in a type 4 A-domain encapsulin nanocompartment system. Its cargo may be upstream glyceraldehyde-3-phosphate dehydrogenase (AC P61879). This chain is Putative type 4B encapsulin shell protein PF1875, found in Pyrococcus furiosus (strain ATCC 43587 / DSM 3638 / JCM 8422 / Vc1).